The primary structure comprises 179 residues: Acireductone dioxygenase (179 aa).

A disordered region spans residues 7-26 (MDDAPGDPRQPHRPDPGRPV). The Fe(2+) site is built by His88, His90, Glu94, and His133. Positions 88, 90, 94, and 133 each coordinate Ni(2+).

It belongs to the acireductone dioxygenase (ARD) family. Monomer. Interacts with MMP14. Fe(2+) is required as a cofactor. The cofactor is Ni(2+). Detected in heart, colon, lung, stomach, brain, spleen, liver, skeletal muscle and kidney.

The protein resides in the cytoplasm. It is found in the nucleus. It localises to the cell membrane. The enzyme catalyses 1,2-dihydroxy-5-(methylsulfanyl)pent-1-en-3-one + O2 = 4-methylsulfanyl-2-oxobutanoate + formate + 2 H(+). It catalyses the reaction 1,2-dihydroxy-5-(methylsulfanyl)pent-1-en-3-one + O2 = 3-(methylsulfanyl)propanoate + CO + formate + 2 H(+). Its pathway is amino-acid biosynthesis; L-methionine biosynthesis via salvage pathway; L-methionine from S-methyl-5-thio-alpha-D-ribose 1-phosphate: step 5/6. In terms of biological role, catalyzes 2 different reactions between oxygen and the acireductone 1,2-dihydroxy-3-keto-5-methylthiopentene (DHK-MTPene) depending upon the metal bound in the active site. Fe-containing acireductone dioxygenase (Fe-ARD) produces formate and 2-keto-4-methylthiobutyrate (KMTB), the alpha-ketoacid precursor of methionine in the methionine recycle pathway. Ni-containing acireductone dioxygenase (Ni-ARD) produces methylthiopropionate, carbon monoxide and formate, and does not lie on the methionine recycle pathway. Also down-regulates cell migration mediated by MMP14. Necessary for hepatitis C virus replication in an otherwise non-permissive cell line. This chain is Acireductone dioxygenase, found in Homo sapiens (Human).